The following is a 491-amino-acid chain: Probable glycine dehydrogenase (decarboxylating) subunit 2 (491 aa).

K273 is modified (N6-(pyridoxal phosphate)lysine).

The protein belongs to the GcvP family. C-terminal subunit subfamily. In terms of assembly, the glycine cleavage system is composed of four proteins: P, T, L and H. In this organism, the P 'protein' is a heterodimer of two subunits. Pyridoxal 5'-phosphate is required as a cofactor.

It catalyses the reaction N(6)-[(R)-lipoyl]-L-lysyl-[glycine-cleavage complex H protein] + glycine + H(+) = N(6)-[(R)-S(8)-aminomethyldihydrolipoyl]-L-lysyl-[glycine-cleavage complex H protein] + CO2. Its function is as follows. The glycine cleavage system catalyzes the degradation of glycine. The P protein binds the alpha-amino group of glycine through its pyridoxal phosphate cofactor; CO(2) is released and the remaining methylamine moiety is then transferred to the lipoamide cofactor of the H protein. The sequence is that of Probable glycine dehydrogenase (decarboxylating) subunit 2 from Bacillus cereus (strain AH187).